We begin with the raw amino-acid sequence, 792 residues long: Phenylalanine--tRNA ligase beta subunit (792 aa).

The region spanning 39-150 (APAFHKVVVA…PDAPVGTDFR (112 aa)) is the tRNA-binding domain. The region spanning 405 to 480 (PARDPIRLGL…RMYGYNRIAA (76 aa)) is the B5 domain. Asp458, Asp464, Glu467, and Glu468 together coordinate Mg(2+). The region spanning 698–791 (SKYPPIRRDI…LENRFGARLR (94 aa)) is the FDX-ACB domain.

The protein belongs to the phenylalanyl-tRNA synthetase beta subunit family. Type 1 subfamily. Tetramer of two alpha and two beta subunits. It depends on Mg(2+) as a cofactor.

The protein resides in the cytoplasm. It catalyses the reaction tRNA(Phe) + L-phenylalanine + ATP = L-phenylalanyl-tRNA(Phe) + AMP + diphosphate + H(+). The chain is Phenylalanine--tRNA ligase beta subunit from Nitrosospira multiformis (strain ATCC 25196 / NCIMB 11849 / C 71).